Reading from the N-terminus, the 181-residue chain is Protein AC41 (181 aa).

Plays a role in late gene expression. This Autographa californica nuclear polyhedrosis virus (AcMNPV) protein is Protein AC41 (AC41).